Consider the following 107-residue polypeptide: uncharacterized protein (107 aa).

The N-terminal stretch at 1-20 is a signal peptide; sequence MYIKGRLIFFFVVLVIALCS.

This is an uncharacterized protein from Listeria monocytogenes serovar 1/2a (strain ATCC BAA-679 / EGD-e).